The primary structure comprises 389 residues: uncharacterized protein (389 aa).

Positions 1–12 (MVHATSQSASTE) are enriched in polar residues. Disordered regions lie at residues 1–49 (MVHA…DEDL) and 86–111 (HKSM…ANRA). Acidic residues predominate over residues 40–49 (ESGDEYDEDL). Positions 93–110 (RGKKKRGKTAKKAKKANR) are enriched in basic residues.

This is an uncharacterized protein from Caenorhabditis elegans.